The primary structure comprises 205 residues: Small ribosomal subunit protein uS4 (205 aa).

The disordered stretch occupies residues 26-47 (PVNKREYGPGQHGQRRKQKPSD). An S4 RNA-binding domain is found at 94–154 (RRLDAVVYRL…EKSKHLAIVL (61 aa)).

Belongs to the universal ribosomal protein uS4 family. In terms of assembly, part of the 30S ribosomal subunit. Contacts protein S5. The interaction surface between S4 and S5 is involved in control of translational fidelity.

Functionally, one of the primary rRNA binding proteins, it binds directly to 16S rRNA where it nucleates assembly of the body of the 30S subunit. With S5 and S12 plays an important role in translational accuracy. The polypeptide is Small ribosomal subunit protein uS4 (Gluconacetobacter diazotrophicus (strain ATCC 49037 / DSM 5601 / CCUG 37298 / CIP 103539 / LMG 7603 / PAl5)).